The following is a 338-amino-acid chain: 1-aminocyclopropane-1-carboxylate deaminase (338 aa).

Lys-51 is modified (N6-(pyridoxal phosphate)lysine). Ser-78 (nucleophile) is an active-site residue.

The protein belongs to the ACC deaminase/D-cysteine desulfhydrase family. In terms of assembly, homotrimer. Pyridoxal 5'-phosphate serves as cofactor.

It carries out the reaction 1-aminocyclopropane-1-carboxylate + H2O = 2-oxobutanoate + NH4(+). In terms of biological role, catalyzes a cyclopropane ring-opening reaction, the irreversible conversion of 1-aminocyclopropane-1-carboxylate (ACC) to ammonia and alpha-ketobutyrate. Allows growth on ACC as a nitrogen source. This is 1-aminocyclopropane-1-carboxylate deaminase from Methylibium petroleiphilum (strain ATCC BAA-1232 / LMG 22953 / PM1).